The following is a 92-amino-acid chain: Endoribonuclease HigB (92 aa).

His92 is a catalytic residue.

In terms of assembly, forms a complex with the antitoxin HigA which inhibits the mRNA interferase activity. The heterodimer dimerizes to form a HigB-(HigA)2-HigB tetramer that is able to bind to the DNA.

In terms of biological role, toxic component of a type II toxin-antitoxin (TA) system. A ribosome-associated translation-dependent mRNA interferase. Inhibits translation by sequence-specific cleavage of mRNA. Prefers either in-frame or out-of-frame 5'-AAA-3' codons (lysine). Also cleaves the first three AAAs of stretches of four or more A sequences. 20% of codons containing AA are cleaved and occassionally cuts even at a single A. This Proteus vulgaris protein is Endoribonuclease HigB.